The primary structure comprises 79 residues: Large ribosomal subunit protein uL24 (79 aa).

It belongs to the universal ribosomal protein uL24 family. Part of the 50S ribosomal subunit.

In terms of biological role, one of two assembly initiator proteins, it binds directly to the 5'-end of the 23S rRNA, where it nucleates assembly of the 50S subunit. Its function is as follows. One of the proteins that surrounds the polypeptide exit tunnel on the outside of the subunit. The sequence is that of Large ribosomal subunit protein uL24 from Lactobacillus delbrueckii subsp. bulgaricus (strain ATCC BAA-365 / Lb-18).